A 95-amino-acid chain; its full sequence is Putative RelE-like toxin protein (95 aa).

Belongs to the RelE toxin family.

In terms of biological role, toxic component of a type II toxin-antitoxin (TA) system. The protein is Putative RelE-like toxin protein of Escherichia coli.